Consider the following 993-residue polypeptide: Receptor-type tyrosine-protein kinase FLT3 (993 aa).

The N-terminal stretch at 1-26 is a signal peptide; it reads MPALARDGGQLPLLVVFSAMIFGTIT. Residues 27–543 are Extracellular-facing; the sequence is NQDLPVIKCV…PFPFIQDNIS (517 aa). A disulfide bridge links Cys-35 with Cys-65. N-linked (GlcNAc...) asparagine glycosylation is found at Asn-43 and Asn-100. The cysteines at positions 103 and 114 are disulfide-linked. The N-linked (GlcNAc...) asparagine glycan is linked to Asn-151. 3 cysteine pairs are disulfide-bonded: Cys-199–Cys-206, Cys-232–Cys-241, and Cys-272–Cys-330. Residues 253–343 enclose the Ig-like C2-type domain; sequence PQTTLPQLFL…KHPSQSALVT (91 aa). N-linked (GlcNAc...) asparagine glycosylation is found at Asn-306, Asn-323, Asn-351, and Asn-354. 2 disulfide bridges follow: Cys-368-Cys-407 and Cys-381-Cys-392. N-linked (GlcNAc...) asparagine glycosylation is found at Asn-473, Asn-502, and Asn-541. A helical transmembrane segment spans residues 544 to 563; the sequence is FYATIGVCLLFIVVLTLLIC. The Cytoplasmic segment spans residues 564 to 993; the sequence is HKYKKQFRYE…LSPQAQVEDS (430 aa). Tyr-572 carries the post-translational modification Phosphotyrosine. Ser-574 is modified (phosphoserine). Phosphotyrosine; by autocatalysis is present on residues Tyr-589, Tyr-591, and Tyr-599. The important for normal regulation of the kinase activity and for maintaining the kinase in an inactive state in the absence of bound ligand stretch occupies residues 591-597; the sequence is YVDFREY. The region spanning 610 to 943 is the Protein kinase domain; the sequence is LEFGKVLGSG…PSFPNLTSFL (334 aa). ATP contacts are provided by residues 616-624 and Lys-644; that span reads LGSGAFGKV. Phosphotyrosine; by autocatalysis is present on Tyr-726. Position 759 is a phosphoserine (Ser-759). Phosphotyrosine is present on residues Tyr-768 and Tyr-793. The active-site Proton acceptor is Asp-811. 3 positions are modified to phosphotyrosine; by autocatalysis: Tyr-842, Tyr-955, and Tyr-969. Ser-993 carries the post-translational modification Phosphoserine.

Belongs to the protein kinase superfamily. Tyr protein kinase family. CSF-1/PDGF receptor subfamily. As to quaternary structure, monomer in the absence of bound FLT3LG. Homodimer in the presence of bound FLT3LG. Interacts with FIZ1 following ligand activation. Interacts with FES, FER, LYN, FGR, HCK, SRC and GRB2. Interacts with PTPRJ/DEP-1 and PTPN11/SHP2. Interacts with RNF115 and RNF126. In terms of assembly, (Microbial infection) Interacts with human cytomegalovirus protein UL7. Post-translationally, N-glycosylated, contains complex N-glycans with sialic acid. In terms of processing, autophosphorylated on several tyrosine residues in response to FLT3LG binding. FLT3LG binding also increases phosphorylation of mutant kinases that are constitutively activated. Dephosphorylated by PTPRJ/DEP-1, PTPN1, PTPN6/SHP-1, and to a lesser degree by PTPN12. Dephosphorylation is important for export from the endoplasmic reticulum and location at the cell membrane. Rapidly ubiquitinated by UBE2L6 and the E3 ubiquitin-protein ligase SIAH1 after autophosphorylation, leading to its proteasomal degradation. In terms of tissue distribution, detected in bone marrow, in hematopoietic stem cells, in myeloid progenitor cells and in granulocyte/macrophage progenitor cells (at protein level). Detected in bone marrow, liver, thymus, spleen and lymph node, and at low levels in kidney and pancreas. Highly expressed in T-cell leukemia.

The protein resides in the membrane. It is found in the endoplasmic reticulum lumen. The catalysed reaction is L-tyrosyl-[protein] + ATP = O-phospho-L-tyrosyl-[protein] + ADP + H(+). Present in an inactive conformation in the absence of bound ligand. FLT3LG binding leads to dimerization and activation by autophosphorylation. Functionally, tyrosine-protein kinase that acts as a cell-surface receptor for the cytokine FLT3LG and regulates differentiation, proliferation and survival of hematopoietic progenitor cells and of dendritic cells. Promotes phosphorylation of SHC1 and AKT1, and activation of the downstream effector MTOR. Promotes activation of RAS signaling and phosphorylation of downstream kinases, including MAPK1/ERK2 and/or MAPK3/ERK1. Promotes phosphorylation of FES, FER, PTPN6/SHP, PTPN11/SHP-2, PLCG1, and STAT5A and/or STAT5B. Activation of wild-type FLT3 causes only marginal activation of STAT5A or STAT5B. Mutations that cause constitutive kinase activity promote cell proliferation and resistance to apoptosis via the activation of multiple signaling pathways. This chain is Receptor-type tyrosine-protein kinase FLT3 (FLT3), found in Homo sapiens (Human).